Reading from the N-terminus, the 340-residue chain is Serine racemase (340 aa).

E13 is a Mg(2+) binding site. The ATP site is built by S31, S32, I33, K51, and T52. K56 functions as the Proton acceptor in the catalytic mechanism. K56 carries the N6-(pyridoxal phosphate)lysine modification. Ca(2+) is bound by residues P69 and T81. The active-site Proton acceptor is S84. N86 is a binding site for pyridoxal 5'-phosphate. Position 89 (Q89) interacts with ATP. Position 113 is an S-nitrosocysteine (C113). Position 121 (Y121) interacts with ATP. N154 contributes to the pyridoxal 5'-phosphate binding site. D178 is a binding site for Mg(2+). Residues G185, G186, G187, G188, and M189 each coordinate pyridoxal 5'-phosphate. Residues E210, A214, D216, and N247 each coordinate Mg(2+). Ca(2+) is bound by residues E210, A214, D216, and N247. Mn(2+) contacts are provided by E210, A214, and D216. K279 contacts ATP. S313 lines the pyridoxal 5'-phosphate pocket. ATP is bound at residue N316.

It belongs to the serine/threonine dehydratase family. As to quaternary structure, homodimer. Mg(2+) is required as a cofactor. Mn(2+) serves as cofactor. The cofactor is Ca(2+). Requires pyridoxal 5'-phosphate as cofactor. Post-translationally, S-nitrosylated, leading to decrease the enzyme activity. In terms of tissue distribution, expressed in the cerebellum, hippocampus, dorsolateral prefrontal cortex, and in motor neurons and glial cells of the lumbar spinal cord (at protein level). Increased in the dorsolateral prefrontal cortex of schizophrenic patients (at protein level). Brain: expressed at high levels in hippocampus and corpus callosum, intermediate levels in substantia nigra and caudate, and low levels in amygdala, thalamus, and subthalamic nuclei. Expressed in heart, skeletal muscle, kidney, and liver.

The catalysed reaction is L-serine = D-serine. It catalyses the reaction D-serine = pyruvate + NH4(+). The enzyme catalyses L-serine = pyruvate + NH4(+). With respect to regulation, allosterically activated by magnesium, and possibly also other divalent metal cations. Allosterically activated by ATP, ADP or GTP. Competitively inhibited by malonate. Inhibited by meso-tartrate and malonate. In terms of biological role, catalyzes the synthesis of D-serine from L-serine. D-serine is a key coagonist with glutamate at NMDA receptors. Has dehydratase activity towards both L-serine and D-serine. The polypeptide is Serine racemase (SRR) (Homo sapiens (Human)).